The chain runs to 119 residues: MANIKKGDLVQVITGRSQARGGDRGKQGRVIEVLVEKNRVIVEGVNFVTKHVRVGQTQRGTKTGGIETHEASIHVSNVALVDPETKKPTRVGFRTETVTKDGVAKTVRVRYAKKSGKDL.

This sequence belongs to the universal ribosomal protein uL24 family. As to quaternary structure, part of the 50S ribosomal subunit.

One of two assembly initiator proteins, it binds directly to the 5'-end of the 23S rRNA, where it nucleates assembly of the 50S subunit. Its function is as follows. One of the proteins that surrounds the polypeptide exit tunnel on the outside of the subunit. The chain is Large ribosomal subunit protein uL24 from Leifsonia xyli subsp. xyli (strain CTCB07).